The following is a 157-amino-acid chain: SsrA-binding protein (157 aa).

The disordered stretch occupies residues 128–157 (LARGKKQHDKRAAEKERDWEREKQRVMRRG). A compositionally biased stretch (basic and acidic residues) spans 137 to 157 (KRAAEKERDWEREKQRVMRRG).

The protein belongs to the SmpB family.

The protein resides in the cytoplasm. Required for rescue of stalled ribosomes mediated by trans-translation. Binds to transfer-messenger RNA (tmRNA), required for stable association of tmRNA with ribosomes. tmRNA and SmpB together mimic tRNA shape, replacing the anticodon stem-loop with SmpB. tmRNA is encoded by the ssrA gene; the 2 termini fold to resemble tRNA(Ala) and it encodes a 'tag peptide', a short internal open reading frame. During trans-translation Ala-aminoacylated tmRNA acts like a tRNA, entering the A-site of stalled ribosomes, displacing the stalled mRNA. The ribosome then switches to translate the ORF on the tmRNA; the nascent peptide is terminated with the 'tag peptide' encoded by the tmRNA and targeted for degradation. The ribosome is freed to recommence translation, which seems to be the essential function of trans-translation. In Methylococcus capsulatus (strain ATCC 33009 / NCIMB 11132 / Bath), this protein is SsrA-binding protein.